A 683-amino-acid chain; its full sequence is Methionine--tRNA ligase (683 aa).

Positions 15–25 (PYANGSIHLGH) match the 'HIGH' region motif. Residues C146, C149, C159, and C162 each contribute to the Zn(2+) site. Positions 332 to 336 (KMSKS) match the 'KMSKS' region motif. ATP is bound at residue K335. The region spanning 582–683 (DFAKVDLRIA…QGAQAGMRVM (102 aa)) is the tRNA-binding domain.

The protein belongs to the class-I aminoacyl-tRNA synthetase family. MetG type 1 subfamily. As to quaternary structure, homodimer. The cofactor is Zn(2+).

It is found in the cytoplasm. It carries out the reaction tRNA(Met) + L-methionine + ATP = L-methionyl-tRNA(Met) + AMP + diphosphate. Its function is as follows. Is required not only for elongation of protein synthesis but also for the initiation of all mRNA translation through initiator tRNA(fMet) aminoacylation. The protein is Methionine--tRNA ligase of Vibrio cholerae serotype O1 (strain ATCC 39541 / Classical Ogawa 395 / O395).